A 310-amino-acid polypeptide reads, in one-letter code: Ribonuclease HIII (310 aa).

An RNase H type-2 domain is found at 91-307 (YNCIGSDEAG…REKAQNLVTK (217 aa)). Residues Asp97, Glu98, and Asp202 each coordinate a divalent metal cation.

It belongs to the RNase HII family. RnhC subfamily. It depends on Mn(2+) as a cofactor. Requires Mg(2+) as cofactor.

It localises to the cytoplasm. It catalyses the reaction Endonucleolytic cleavage to 5'-phosphomonoester.. Its function is as follows. Endonuclease that specifically degrades the RNA of RNA-DNA hybrids. The chain is Ribonuclease HIII from Staphylococcus haemolyticus (strain JCSC1435).